A 279-amino-acid polypeptide reads, in one-letter code: Protein SCO2 homolog, mitochondrial (279 aa).

Residues 73–90 (LVVTLLFGGGIIGTWWYV) form a helical membrane-spanning segment. At 91–279 (HQEKEKRIQM…MKTFVRLFPD (189 aa)) the chain is on the mitochondrial intermembrane side. The 175-residue stretch at 97–271 (RIQMQRLEQL…IAESIRNHMK (175 aa)) folds into the Thioredoxin domain. Residues cysteine 145, cysteine 149, and histidine 236 each contribute to the Cu cation site. An intrachain disulfide couples cysteine 145 to cysteine 149.

Belongs to the SCO1/2 family. Homodimer.

The protein resides in the mitochondrion inner membrane. Its function is as follows. Copper metallochaperone essential for the synthesis and maturation of cytochrome c oxidase subunit II (MT-CO2/COX2) by facilitating the incorporation of copper into the Cu(A) site of MT-CO2/COX2. Could also act as a thiol-disulfide oxidoreductase to regulate the redox state of the cysteines in SCO1 during maturation of MT-CO2/COX2. This Danio rerio (Zebrafish) protein is Protein SCO2 homolog, mitochondrial (sco2).